Reading from the N-terminus, the 197-residue chain is Phospholipid hydroperoxide glutathione peroxidase (197 aa).

At Ser40 the chain carries Phosphoserine. The active site involves Sec73. Sec73 is a non-standard amino acid (selenocysteine).

Belongs to the glutathione peroxidase family. In terms of assembly, monomer. Has a tendency to form higher mass oligomers. Interacts with FUNDC1; this interaction promotes GPX4 recruitment into mitochondria through TOM/TIM complex where it is degraded by mitophagy.

It localises to the mitochondrion. The protein resides in the cytoplasm. It catalyses the reaction a hydroperoxy polyunsaturated fatty acid + 2 glutathione = a hydroxy polyunsaturated fatty acid + glutathione disulfide + H2O. It carries out the reaction 2 glutathione + H2O2 = glutathione disulfide + 2 H2O. The catalysed reaction is tert-butyl hydroperoxide + 2 glutathione = tert-butanol + glutathione disulfide + H2O. The enzyme catalyses cumene hydroperoxide + 2 glutathione = 2-phenylpropan-2-ol + glutathione disulfide + H2O. It catalyses the reaction (9S)-hydroperoxy-(10E,12Z)-octadecadienoate + 2 glutathione = (9S)-hydroxy-(10E,12Z)-octadecadienoate + glutathione disulfide + H2O. It carries out the reaction (13S)-hydroperoxy-(9Z,11E)-octadecadienoate + 2 glutathione = (13S)-hydroxy-(9Z,11E)-octadecadienoate + glutathione disulfide + H2O. The catalysed reaction is (5S)-hydroperoxy-(6E,8Z,11Z,14Z)-eicosatetraenoate + 2 glutathione = (5S)-hydroxy-(6E,8Z,11Z,14Z)-eicosatetraenoate + glutathione disulfide + H2O. The enzyme catalyses (12R)-hydroperoxy-(5Z,8Z,10E,14Z)-eicosatetraenoate + 2 glutathione = (12R)-hydroxy-(5Z,8Z,10E,14Z)-eicosatetraenoate + glutathione disulfide + H2O. It catalyses the reaction (12S)-hydroperoxy-(5Z,8Z,10E,14Z)-eicosatetraenoate + 2 glutathione = (12S)-hydroxy-(5Z,8Z,10E,14Z)-eicosatetraenoate + glutathione disulfide + H2O. It carries out the reaction (15S)-hydroperoxy-(5Z,8Z,11Z,13E)-eicosatetraenoate + 2 glutathione = (15S)-hydroxy-(5Z,8Z,11Z,13E)-eicosatetraenoate + glutathione disulfide + H2O. The catalysed reaction is (5S)-hydroperoxy-(6E,8Z,11Z,14Z,17Z)-eicosapentaenoate + 2 glutathione = (5S)-hydroxy-(6E,8Z,11Z,14Z,17Z)-eicosapentaenoate + glutathione disulfide + H2O. The enzyme catalyses (12S)-hydroperoxy-(5Z,8Z,10E,14Z,17Z)-eicosapentaenoate + 2 glutathione = (12S)-hydroxy-(5Z,8Z,10E,14Z,17Z)-eicosapentaenoate + glutathione disulfide + H2O. It catalyses the reaction (15S)-hydroperoxy-(5Z,8Z,11Z,13E,17Z)-eicosapentaenoate + 2 glutathione = (15S)-hydroxy-(5Z,8Z,11Z,13E,17Z)-eicosapentaenoate + glutathione disulfide + H2O. It carries out the reaction (15S)-hydroperoxy-(11Z,13E)-eicosadienoate + 2 glutathione = (15S)-hydroxy-(11Z,13E)-eicosadienoate + glutathione disulfide + H2O. The catalysed reaction is (17S)-hydroperoxy-(4Z,7Z,10Z,13Z,15E,19Z)-docosahexaenoate + 2 glutathione = (17S)-hydroxy-(4Z,7Z,10Z,13Z,15E,19Z)-docosahexaenoate + glutathione disulfide + H2O. The enzyme catalyses a hydroperoxy-1,2-diacyl-glycero-3-phosphocholine + 2 glutathione = a hydroxy-1,2-diacyl-glycero-3-phosphocholine + glutathione disulfide + H2O. Functionally, essential antioxidant peroxidase that directly reduces phospholipid hydroperoxide even if they are incorporated in membranes and lipoproteins. Can also reduce fatty acid hydroperoxide, cholesterol hydroperoxide and thymine hydroperoxide. Plays a key role in protecting cells from oxidative damage by preventing membrane lipid peroxidation. Required to prevent cells from ferroptosis, a non-apoptotic cell death resulting from an iron-dependent accumulation of lipid reactive oxygen species. The presence of selenocysteine (Sec) versus Cys at the active site is essential for life: it provides resistance to overoxidation and prevents cells against ferroptosis. The presence of Sec at the active site is also essential for the survival of a specific type of parvalbumin-positive interneurons, thereby preventing against fatal epileptic seizures. May be required to protect cells from the toxicity of ingested lipid hydroperoxides. Required for normal sperm development and male fertility. Essential for maturation and survival of photoreceptor cells. Plays a role in a primary T-cell response to viral and parasitic infection by protecting T-cells from ferroptosis and by supporting T-cell expansion. Plays a role of glutathione peroxidase in platelets in the arachidonic acid metabolism. Reduces hydroperoxy ester lipids formed by a 15-lipoxygenase that may play a role as down-regulator of the cellular 15-lipoxygenase pathway. Can also reduce small soluble hydroperoxides such as H2O2, cumene hydroperoxide and tert-butyl hydroperoxide. This Bos taurus (Bovine) protein is Phospholipid hydroperoxide glutathione peroxidase.